Here is a 265-residue protein sequence, read N- to C-terminus: RNA polymerase sigma factor SigI2 (265 aa).

A Polymerase core binding motif is present at residues Asp71 to Ile84. The segment at residues Lys211–Thr230 is a DNA-binding region (H-T-H motif).

It belongs to the sigma-70 factor family. SigI subfamily. As to quaternary structure, interacts with RsgI2.

The protein resides in the cytoplasm. Its activity is regulated as follows. Negatively regulated by the anti-sigma-I factor RsgI2. Binding of the polysaccharide substrate to RsgI2 may lead to the release and activation of SigI2. Its function is as follows. Sigma factors are initiation factors that promote the attachment of RNA polymerase to specific initiation sites and are then released. This sigma factor is involved in regulation of cellulosomal genes via an external polysaccharide-sensing mechanism. This is RNA polymerase sigma factor SigI2 from Acetivibrio thermocellus (strain ATCC 27405 / DSM 1237 / JCM 9322 / NBRC 103400 / NCIMB 10682 / NRRL B-4536 / VPI 7372) (Clostridium thermocellum).